The sequence spans 115 residues: UPF0145 protein lp_2083 (115 aa).

It belongs to the UPF0145 family.

The protein is UPF0145 protein lp_2083 of Lactiplantibacillus plantarum (strain ATCC BAA-793 / NCIMB 8826 / WCFS1) (Lactobacillus plantarum).